A 211-amino-acid polypeptide reads, in one-letter code: Envelope protein UL45 homolog (211 aa).

Over 1–46 (MMSPTPEDDRDLVVVRGRLRMMDNGAEHDRERRSYTAWPHLCCGCT) the chain is Intravirion. The helical; Signal-anchor for type II membrane protein transmembrane segment at 47 to 67 (IGIILTMFVIATTLLLASLFA) threads the bilayer. At 68–211 (FSYMSLESGT…SSILSNAIMK (144 aa)) the chain is on the virion surface side. N-linked (GlcNAc...) asparagine; by host glycans are attached at residues Asn-96 and Asn-133.

It belongs to the herpesviridae HHV-1 UL45 family.

The protein localises to the virion membrane. In Gallid herpesvirus 2 (strain Chicken/Md5/ATCC VR-987) (GaHV-2), this protein is Envelope protein UL45 homolog (UL45H).